Reading from the N-terminus, the 377-residue chain is Fructose-bisphosphate aldolase 1, chloroplastic (377 aa).

Substrate contacts are provided by arginine 74 and lysine 164. Residue glutamate 204 is the Proton acceptor of the active site. Catalysis depends on lysine 246, which acts as the Schiff-base intermediate with dihydroxyacetone-P.

This sequence belongs to the class I fructose-bisphosphate aldolase family.

Its subcellular location is the plastid. The protein resides in the chloroplast. The catalysed reaction is beta-D-fructose 1,6-bisphosphate = D-glyceraldehyde 3-phosphate + dihydroxyacetone phosphate. It participates in carbohydrate degradation; glycolysis; D-glyceraldehyde 3-phosphate and glycerone phosphate from D-glucose: step 4/4. This chain is Fructose-bisphosphate aldolase 1, chloroplastic (ALDCHL), found in Chlamydomonas reinhardtii (Chlamydomonas smithii).